A 230-amino-acid polypeptide reads, in one-letter code: Protein GrpE (230 aa).

2 disordered regions span residues 1 to 26 (MADE…DREA) and 209 to 230 (GVSK…EDNA). Polar residues predominate over residues 221 to 230 (NGASTSEDNA).

This sequence belongs to the GrpE family. Homodimer.

The protein resides in the cytoplasm. Functionally, participates actively in the response to hyperosmotic and heat shock by preventing the aggregation of stress-denatured proteins, in association with DnaK and GrpE. It is the nucleotide exchange factor for DnaK and may function as a thermosensor. Unfolded proteins bind initially to DnaJ; upon interaction with the DnaJ-bound protein, DnaK hydrolyzes its bound ATP, resulting in the formation of a stable complex. GrpE releases ADP from DnaK; ATP binding to DnaK triggers the release of the substrate protein, thus completing the reaction cycle. Several rounds of ATP-dependent interactions between DnaJ, DnaK and GrpE are required for fully efficient folding. The chain is Protein GrpE from Brucella suis biovar 1 (strain 1330).